The chain runs to 201 residues: HTH-type transcriptional regulator Hpr (201 aa).

An HTH marR-type domain is found at 13–157; sequence AMLFSQRIAQ…MMCIIRNIYG (145 aa). Residues 63-86 constitute a DNA-binding region (H-T-H motif); sequence ISEIAKFGVMHVSTAFNFSKKLEE.

Homodimer.

In terms of biological role, negative regulator of protease production and sporulation. The sequence is that of HTH-type transcriptional regulator Hpr from Geobacillus sp. (strain WCH70).